The chain runs to 432 residues: Polyamine export protein (432 aa).

The CNNM transmembrane domain occupies 1 to 201 (MIMELFHTIL…AEAGVLKTQE (201 aa)). The next 4 membrane-spanning stretches (helical) occupy residues 2 to 22 (IMEL…SAVV), 61 to 81 (FITV…GIGE), 100 to 120 (WIAP…FILF), and 138 to 158 (LSVV…VWFF). 2 consecutive CBS domains span residues 220–279 (MTTR…NENV) and 286–345 (LLRK…SNEE).

This sequence belongs to the UPF0053 family. PaeA subfamily.

Its subcellular location is the cell inner membrane. Functionally, involved in cadaverine and putrescine tolerance in stationary phase. May facilitate the efflux of both cadaverine and putrescine from the cytoplasm, reducing potentially toxic levels under certain stress conditions. The protein is Polyamine export protein of Haemophilus influenzae (strain ATCC 51907 / DSM 11121 / KW20 / Rd).